The following is a 98-amino-acid chain: NADH-ubiquinone oxidoreductase chain 4L (98 aa).

3 consecutive transmembrane segments (helical) span residues 1–21, 28–48, and 59–79; these read MMSISLNLTMAFLLALAGVLI, STLLCLEGMMLSLFILMALLI, and APLILLVFSACEAGVGLALLV.

The protein belongs to the complex I subunit 4L family. In terms of assembly, core subunit of respiratory chain NADH dehydrogenase (Complex I) which is composed of 45 different subunits.

Its subcellular location is the mitochondrion inner membrane. The catalysed reaction is a ubiquinone + NADH + 5 H(+)(in) = a ubiquinol + NAD(+) + 4 H(+)(out). Functionally, core subunit of the mitochondrial membrane respiratory chain NADH dehydrogenase (Complex I) which catalyzes electron transfer from NADH through the respiratory chain, using ubiquinone as an electron acceptor. Part of the enzyme membrane arm which is embedded in the lipid bilayer and involved in proton translocation. The chain is NADH-ubiquinone oxidoreductase chain 4L (MT-ND4L) from Osphranter robustus (Wallaroo).